The sequence spans 408 residues: MSPCENDTPINWKRNLIVAWLGCFLTGAAFSLVMPFLPLYVEQLGVTGHSALNMWSGIVFSITFLFSAIASPFWGGLADRKGRKLMLLRSALGMGIVMVLMGLAQNIWQFLILRALLGLLGGFVPNANALIATQVPRNKSGWALGTLSTGGVSGALLGPMAGGLLADSYGLRPVFFITASVLILCFFVTLFCIREKFQPVSKKEMLHMREVVTSLKKPKLVLSLFVTTLIIQVATGSIAPILTLYVRELAGNVSNVAFISGMIASVPGVAALLSAPRLGKLGDRIGPEKILITALIFSVLLLIPMSYVQTPLQLGILRFLLGAADGALLPAVQTLLVYNSSNQIAGRIFSYNQSFRDIGNVTGPLMGAAISANYGFRAVFLVTAGVVLFNAVYSWNSLRRRRIPQVSN.

10 helical membrane passes run 16–36 (LIVA…VMPF), 58–78 (IVFS…GGLA), 92–112 (LGMG…QFLI), 115–135 (ALLG…ATQV), 146–166 (TLST…GLLA), 173–193 (PVFF…LFCI), 224–244 (LFVT…ILTL), 256–276 (VAFI…LSAP), 290–310 (ILIT…YVQT), and 378–398 (AVFL…WNSL).

This sequence belongs to the major facilitator superfamily. DHA1 family. MdtG (TC 2.A.1.2.20) subfamily.

The protein localises to the cell inner membrane. Functionally, confers resistance to fosfomycin and deoxycholate. The protein is Multidrug resistance protein MdtG of Escherichia coli O17:K52:H18 (strain UMN026 / ExPEC).